A 109-amino-acid polypeptide reads, in one-letter code: Cysteine-rich venom protein 7 (109 aa).

The signal sequence occupies residues 1 to 21; sequence MSKVFVIILVALMVAISIASA. Intrachain disulfides connect cysteine 30/cysteine 47, cysteine 37/cysteine 52, cysteine 46/cysteine 58, cysteine 70/cysteine 90, and cysteine 78/cysteine 98.

Expressed by the venom gland.

The protein localises to the secreted. This Pimpla hypochondriaca (Parasitoid wasp) protein is Cysteine-rich venom protein 7.